Here is a 785-residue protein sequence, read N- to C-terminus: Endonuclease MutS2 (785 aa).

Position 334–341 (334–341) interacts with ATP; the sequence is GPNTGGKT. The Smr domain occupies 710 to 785; sequence LDLRGQRYDE…GNGATIVKLK (76 aa).

Belongs to the DNA mismatch repair MutS family. MutS2 subfamily. In terms of assembly, homodimer. Binds to stalled ribosomes, contacting rRNA.

Its function is as follows. Endonuclease that is involved in the suppression of homologous recombination and thus may have a key role in the control of bacterial genetic diversity. In terms of biological role, acts as a ribosome collision sensor, splitting the ribosome into its 2 subunits. Detects stalled/collided 70S ribosomes which it binds and splits by an ATP-hydrolysis driven conformational change. Acts upstream of the ribosome quality control system (RQC), a ribosome-associated complex that mediates the extraction of incompletely synthesized nascent chains from stalled ribosomes and their subsequent degradation. Probably generates substrates for RQC. This Lactobacillus helveticus (strain DPC 4571) protein is Endonuclease MutS2.